Consider the following 295-residue polypeptide: Hepatic leukemia factor (295 aa).

Positions Pro-36 to Asp-52 are enriched in basic and acidic residues. 2 disordered regions span residues Pro-36–Tyr-76 and Leu-92–Arg-149. The 64-residue stretch at Asp-225–Tyr-288 folds into the bZIP domain. Residues Lys-227–Arg-247 are basic motif. The interval Leu-248–Ile-255 is leucine-zipper.

The protein belongs to the bZIP family. PAR subfamily. As to quaternary structure, binds DNA specifically as homodimer or heterodimer with other PAR factors.

The protein localises to the nucleus. This Mus musculus (Mouse) protein is Hepatic leukemia factor (Hlf).